The primary structure comprises 1187 residues: Protein WWC2 (1187 aa).

WW domains follow at residues 10 to 43 and 57 to 90; these read LPLP…DPRD and DELP…DPRK. 2 coiled-coil regions span residues 121 to 194 and 224 to 256; these read KEQR…YKQQ and ELKS…FHLD. Phosphoserine is present on Ser286. A coiled-coil region spans residues 302 to 423; that stretch reads LAEKVRLSLQ…EETTKLTTSL (122 aa). A disordered region spans residues 438 to 464; it reads SSGSSLGSLASSRGSLNTSSRGSLNSL. The region spanning 697–820 is the C2 domain; it reads ETAQVQIGLR…FSNEIFMLWY (124 aa). 2 disordered regions span residues 830-849 and 874-963; these read CKKN…QPML and ELAQ…ETNT. Residues 859–885 adopt a coiled-coil conformation; the sequence is ALLARTSAELLAVEQELAQEEEEEELR. Residues 875 to 884 show a composition bias toward acidic residues; sequence LAQEEEEEEL. Thr999 bears the Phosphothreonine mark. Position 1017 is a phosphoserine (Ser1017). The interaction with PRKCZ stretch occupies residues 1026 to 1045; it reads SLFVRNSTERRSLRVKRAVC. A coiled-coil region spans residues 1063-1143; that stretch reads DLELDLQASL…DLNAERLMRQ (81 aa).

This sequence belongs to the WWC family. As to quaternary structure, forms homodimers and heterodimers with WWC1 and WWC3. Interacts with DLC1 and PRKCZ. Interacts (via WW domains) with LATS1 and LATS2.

The protein localises to the cytoplasm. It is found in the cytosol. Functionally, regulator of the Hippo signaling pathway, also known as the Salvador-Warts-Hippo (SWH) pathway. Enhances phosphorylation of LATS1 and YAP1 and negatively regulates cell proliferation and organ growth due to a suppression of the transcriptional activity of YAP1, the major effector of the Hippo pathway. This is Protein WWC2 (Wwc2) from Mus musculus (Mouse).